The primary structure comprises 286 residues: Protease HtpX homolog (286 aa).

Helical transmembrane passes span 7–27 (TFMLMAAITALFIVIGGMIGG) and 29–49 (SGMMLALLFALGMNFFSYWFS). A Zn(2+)-binding site is contributed by His-131. The active site involves Glu-132. His-135 serves as a coordination point for Zn(2+). 2 consecutive transmembrane segments (helical) span residues 146 to 166 (ISATMAGAISALANFAVFFGG) and 177 to 197 (IAGIAVAILAPLAAAMIQMAI). Residue Glu-202 coordinates Zn(2+).

The protein belongs to the peptidase M48B family. Zn(2+) is required as a cofactor.

The protein resides in the cell inner membrane. In Ralstonia pickettii (strain 12J), this protein is Protease HtpX homolog.